Reading from the N-terminus, the 179-residue chain is MKQFLDFLPLVVFFAFYKLYDIYAATSALIVATAIVLIYSWVRYRKIEKMALITFVLVAVFGGLTLFFHNDEFIKWKVTVIYALFAGALLISQWVMKKPLIQRMLGKELALPQQVWSKLNLAWALFFIACGLANIYIAFWLPQNIWVNFKVFGLTALTLIFTLLSGVYIYRHLPQEDKS.

5 helical membrane passes run 22-42 (IYAA…YSWV), 50-70 (MALI…FFHN), 76-96 (WKVT…QWVM), 121-141 (LAWA…AFWL), and 149-169 (FKVF…GVYI).

The protein belongs to the YciB family.

Its subcellular location is the cell inner membrane. Plays a role in cell envelope biogenesis, maintenance of cell envelope integrity and membrane homeostasis. The chain is Inner membrane-spanning protein YciB from Salmonella agona (strain SL483).